A 612-amino-acid polypeptide reads, in one-letter code: uncharacterized protein (612 aa).

Residues 39–100 (ERDHNLWEIE…KNISVKDLDE (62 aa)) are a coiled coil. A disordered region spans residues 219–241 (PLSSGESLPKKEEEVTKSPSFTL). 7 WD repeats span residues 286–325 (TSTQ…NDNS), 337–376 (GHEG…TSDS), 389–432 (GHED…FKIR), 434–470 (DSKQ…LVSQ), 483–523 (AVKD…LLAE), 526–565 (ISKV…STLE), and 574–612 (EEIT…KYLP).

Its subcellular location is the cytoplasm. This is an uncharacterized protein from Schizosaccharomyces pombe (strain 972 / ATCC 24843) (Fission yeast).